Here is a 445-residue protein sequence, read N- to C-terminus: Phosphoglucosamine mutase (445 aa).

The Phosphoserine intermediate role is filled by Ser-99. The Mg(2+) site is built by Ser-99, Asp-242, Asp-244, and Asp-246. Ser-99 bears the Phosphoserine mark.

The protein belongs to the phosphohexose mutase family. Requires Mg(2+) as cofactor. Post-translationally, activated by phosphorylation.

It carries out the reaction alpha-D-glucosamine 1-phosphate = D-glucosamine 6-phosphate. Functionally, catalyzes the conversion of glucosamine-6-phosphate to glucosamine-1-phosphate. The protein is Phosphoglucosamine mutase of Campylobacter lari (strain RM2100 / D67 / ATCC BAA-1060).